The chain runs to 31 residues: Nemertide alpha-6 (31 aa).

Disulfide bonds link Cys-2-Cys-16, Cys-9-Cys-20, and Cys-15-Cys-26. 4-hydroxyproline is present on residues Pro-28 and Pro-29.

This sequence belongs to the nemertide family. In terms of tissue distribution, confined to the epidermis and to the mucus layer.

It is found in the secreted. In terms of biological role, highly potent toxin against both insect and some mammalian sodium channels (Nav). It potently inhibits inactivation of insect sodium channels of B.germanica (BgNav1) (EC(50)=2.6 nM) and also delays the inactivation of mammalian Nav with potent activity on Nav1.1/SCN1A (hNav1.1/SCN1A; EC(50)=7.9 nM, rNav1.2/SCN2A; EC(50)=24.3 nM, rNav1.3/SCN3A; EC(50)=105.6 nM, rNav1.4/SCN4A; EC(50)=46.4 nM, hNav1.5/SCN5A; EC(50)=215.2 nM, mNav1.6/SCN8A; EC(50)=36.3 nM, hNav1.9/SCN9A; EC(50)=97.2 nM). 1 uM is enough to completely inhibits the inactivation, resulting in sustained non-inactivating currents. In addition, the toxin significantly enhances the recovery from inactivation, and the open state is not required for the toxin to interact with the channel. In vivo, injection into brine shrimp (Artemia salina) stops movement or causes death after 24 hours (EC(50)=2.8 uM). The protein is Nemertide alpha-6 of Lineus sanguineus (Ribbon worm).